A 920-amino-acid polypeptide reads, in one-letter code: Dynamin-B (920 aa).

The disordered stretch occupies residues 65-84 (NSNNNNNNNNNNKINKNNNN). The Dynamin-type G domain occupies 154-448 (EITLPQIIVV…LTKHIRDTFP (295 aa)). The segment at 164–171 (GSQSSGKS) is G1 motif. Position 164-172 (164-172 (GSQSSGKSS)) interacts with GTP. A G2 motif region spans residues 190-192 (VTR). The tract at residues 204–241 (TTSRNNVNENEDEDEDDNYYDNDNDDNSLEEWGEFGHT) is disordered. The span at 212–236 (ENEDEDEDDNYYDNDNDDNSLEEWG) shows a compositional bias: acidic residues. The segment at 290–293 (DLPG) is G3 motif. A G4 motif region spans residues 359–362 (TKLD). Residues 359–365 (TKLDLMD) and 390–393 (NRSQ) each bind GTP. Positions 389–392 (VNRS) are G5 motif. Residues 680-790 (FQSTSSTSSS…EIQIQQQQQQ (111 aa)) are disordered. 2 stretches are compositionally biased toward low complexity: residues 681–705 (QSTS…NSNP) and 724–751 (QIKQ…QKQQ). A coiled-coil region spans residues 724–751 (QIKQQQQQQQQQQQQSYQQQQQQQQKQQ). Pro residues predominate over residues 765 to 774 (PPSPPSPPQP). Positions 775–790 (KQQQSHEIQIQQQQQQ) are enriched in low complexity. Residues 825 to 916 (IYLLRRLLLA…SLSQSENSDL (92 aa)) form the GED domain.

It belongs to the TRAFAC class dynamin-like GTPase superfamily. Dynamin/Fzo/YdjA family.

The protein localises to the cytoplasm. Functionally, enzyme hydrolyzing GTP. This Dictyostelium discoideum (Social amoeba) protein is Dynamin-B (dymB).